The primary structure comprises 311 residues: Methionyl-tRNA formyltransferase (311 aa).

110-113 (SLLP) serves as a coordination point for (6S)-5,6,7,8-tetrahydrofolate.

This sequence belongs to the Fmt family.

It carries out the reaction L-methionyl-tRNA(fMet) + (6R)-10-formyltetrahydrofolate = N-formyl-L-methionyl-tRNA(fMet) + (6S)-5,6,7,8-tetrahydrofolate + H(+). In terms of biological role, attaches a formyl group to the free amino group of methionyl-tRNA(fMet). The formyl group appears to play a dual role in the initiator identity of N-formylmethionyl-tRNA by promoting its recognition by IF2 and preventing the misappropriation of this tRNA by the elongation apparatus. The sequence is that of Methionyl-tRNA formyltransferase from Streptococcus uberis (strain ATCC BAA-854 / 0140J).